The primary structure comprises 916 residues: DNA mismatch repair protein MutS (916 aa).

An ATP-binding site is contributed by 665–672; sequence GPNMAGKS.

The protein belongs to the DNA mismatch repair MutS family.

In terms of biological role, this protein is involved in the repair of mismatches in DNA. It is possible that it carries out the mismatch recognition step. This protein has a weak ATPase activity. This Bradyrhizobium sp. (strain ORS 278) protein is DNA mismatch repair protein MutS.